The primary structure comprises 178 residues: MTNKSVRDYIRTIVDFPHEGILFRDVTTLFADPRGFRIAIDQLLAPYAGMRFDKVAGLEARGFILGGAVAHQLSTGFVPIRKKGKLPGRTVSVSYQLEYGEAVVKVHDDAIQAGERILLVDDLLATGGTAEAGIRLIEQLGGEVVGCAFVVDLPDLGGRKKLEAMGMEVHALCAFEGL.

Belongs to the purine/pyrimidine phosphoribosyltransferase family. Homodimer.

The protein localises to the cytoplasm. It carries out the reaction AMP + diphosphate = 5-phospho-alpha-D-ribose 1-diphosphate + adenine. Its pathway is purine metabolism; AMP biosynthesis via salvage pathway; AMP from adenine: step 1/1. Catalyzes a salvage reaction resulting in the formation of AMP, that is energically less costly than de novo synthesis. This Cereibacter sphaeroides (strain ATCC 17025 / ATH 2.4.3) (Rhodobacter sphaeroides) protein is Adenine phosphoribosyltransferase.